Here is a 69-residue protein sequence, read N- to C-terminus: Pantinin-1 (69 aa).

Residues 1–23 (MKTQFVILMITVILMQMLVQTEG) form the signal peptide. Val37 carries the post-translational modification Valine amide. Residues 41–69 (GLNDRDQLDDLFDSDLSDADIKLLKEMFK) constitute a propeptide that is removed on maturation.

It belongs to the non-disulfide-bridged peptide (NDBP) superfamily. Short antimicrobial peptide (group 4) family. In terms of tissue distribution, expressed by the venom gland.

The protein localises to the secreted. It is found in the target cell membrane. Amphipathic peptide that possesses relatively strong activities against Gram-positive bacteria and a fungus, but has very weak antimicrobial activities against Gram-negative bacteria. Also exhibits very low hemolytic activities against human erythrocytes (64 uM induce 21% of hemolysis). Minimal inhibitory concentration (MIC) are the following: 8 uM against S.aureus, 32 uM against B.magaterium, 32 uM against M.luteus, 28 uM against vancomycin-resistant Enterococci, 14 uM against methicillin-resistant S.aureus, 62 uM against E.coli, &gt;87 uM against P.putida, &gt;87 uM against K.oxytoca, 76 uM against E.cloacae, 72 uM against S.enterica and 16 uM against the fungus C.tropicalis. This chain is Pantinin-1, found in Pandinus imperator (Emperor scorpion).